The sequence spans 161 residues: Protein-export protein SecB (161 aa).

The disordered stretch occupies residues 141–161; that stretch reads KKQQETAGEQPDQPADTITRH.

It belongs to the SecB family. Homotetramer, a dimer of dimers. One homotetramer interacts with 1 SecA dimer.

Its subcellular location is the cytoplasm. Its function is as follows. One of the proteins required for the normal export of preproteins out of the cell cytoplasm. It is a molecular chaperone that binds to a subset of precursor proteins, maintaining them in a translocation-competent state. It also specifically binds to its receptor SecA. This Nitrosomonas europaea (strain ATCC 19718 / CIP 103999 / KCTC 2705 / NBRC 14298) protein is Protein-export protein SecB.